A 237-amino-acid polypeptide reads, in one-letter code: Sugar fermentation stimulation protein homolog (237 aa).

This sequence belongs to the SfsA family.

The chain is Sugar fermentation stimulation protein homolog from Actinobacillus pleuropneumoniae serotype 3 (strain JL03).